Reading from the N-terminus, the 69-residue chain is Large ribosomal subunit protein uL29 (69 aa).

It belongs to the universal ribosomal protein uL29 family.

This is Large ribosomal subunit protein uL29 from Synechococcus sp. (strain CC9902).